Consider the following 509-residue polypeptide: 2,3-bisphosphoglycerate-independent phosphoglycerate mutase (509 aa).

Mn(2+)-binding residues include aspartate 12 and serine 62. Serine 62 (phosphoserine intermediate) is an active-site residue. Residues histidine 123, 153 to 154, arginine 185, arginine 191, 260 to 263, and lysine 333 each bind substrate; these read RD and RPDR. Mn(2+)-binding residues include aspartate 400, histidine 404, aspartate 441, histidine 442, and histidine 460.

This sequence belongs to the BPG-independent phosphoglycerate mutase family. Monomer. The cofactor is Mn(2+).

The enzyme catalyses (2R)-2-phosphoglycerate = (2R)-3-phosphoglycerate. Its pathway is carbohydrate degradation; glycolysis; pyruvate from D-glyceraldehyde 3-phosphate: step 3/5. Functionally, catalyzes the interconversion of 2-phosphoglycerate and 3-phosphoglycerate. This Clostridium botulinum (strain ATCC 19397 / Type A) protein is 2,3-bisphosphoglycerate-independent phosphoglycerate mutase.